The chain runs to 347 residues: 4-hydroxy-2-oxovalerate aldolase (347 aa).

Residues isoleucine 2–methionine 252 form the Pyruvate carboxyltransferase domain. Residue arginine 10 to aspartate 11 participates in substrate binding. Mn(2+) is bound at residue aspartate 11. The active-site Proton acceptor is the histidine 14. Substrate is bound by residues serine 164 and histidine 191. Positions 191 and 193 each coordinate Mn(2+).

The protein belongs to the 4-hydroxy-2-oxovalerate aldolase family.

The enzyme catalyses (S)-4-hydroxy-2-oxopentanoate = acetaldehyde + pyruvate. In Burkholderia pseudomallei (strain 1710b), this protein is 4-hydroxy-2-oxovalerate aldolase (mhpE).